A 155-amino-acid polypeptide reads, in one-letter code: MNFISDQVKKLSSSTPEEPDHNKPVEGTETATRPATNAELMASAKVVAEAAQAAARNESDKLDKGKVAGASADILDAAEKYGKFDEKSSTGQYLDKAEKYLNDYESSHSTGAGGPPPPTSQAEPASQPEPAAKKDDEESGGGLGGYAKMAQGFLK.

Position 1 is an N-acetylmethionine (M1). Disordered stretches follow at residues 1-37 and 85-155; these read MNFI…PATN and DEKS…GFLK. The segment covering 95–106 has biased composition (basic and acidic residues); the sequence is DKAEKYLNDYES. The span at 120–130 shows a compositional bias: low complexity; it reads SQAEPASQPEP.

In terms of assembly, interacts with DEK3.

Functionally, may be a negative regulator of the ABA signaling/synthesis pathway. This is Nodulin-related protein 2 from Arabidopsis thaliana (Mouse-ear cress).